The following is a 189-amino-acid chain: Interferon alpha-1/13 (189 aa).

The N-terminal stretch at 1 to 23 (MASPFALLMVLVVLSCKSSCSLG) is a signal peptide. 2 cysteine pairs are disulfide-bonded: cysteine 24/cysteine 122 and cysteine 52/cysteine 162.

It belongs to the alpha/beta interferon family. In terms of assembly, interacts with CR2.

Its subcellular location is the secreted. Produced by macrophages, IFN-alpha have antiviral activities. Interferon stimulates the production of two enzymes: a protein kinase and an oligoadenylate synthetase. The sequence is that of Interferon alpha-1/13 (IFNA1) from Homo sapiens (Human).